A 304-amino-acid chain; its full sequence is MKKALVIKFFMGNYLISDIETKDKITAQVKGKLKNYDTHKKELFIIKVGDIVIYENYLDRYLISEVLERHNELNRPNIANFNQVILVFSLYKPRFQFRLLDKFLLILNKYKLKIILIFTKIDLITKKKFLIIQKKISYYENFYRIYYVNSKNKNSTHHLMDIFSNKITVLAGQTGVGKSTFLNSLKPSLQLKTQEISKKLGLGKHTTKNAQLYEFNGGYIADTPGFSKLDLTIFDYEELKFFYPDFLLYSDKCYFKKDCSHIKEINCGVKKALKLSLIPDWRYDNYLKFIEKIQEQKKLNYNKK.

A CP-type G domain is found at 70–229; sequence HNELNRPNIA…IADTPGFSKL (160 aa). GTP-binding positions include 119-122 and 172-180; these read TKID and GQTGVGKST. Positions 253, 259, 261, and 267 each coordinate Zn(2+).

This sequence belongs to the TRAFAC class YlqF/YawG GTPase family. RsgA subfamily. In terms of assembly, monomer. Associates with 30S ribosomal subunit, binds 16S rRNA. Zn(2+) serves as cofactor.

It is found in the cytoplasm. In terms of biological role, one of several proteins that assist in the late maturation steps of the functional core of the 30S ribosomal subunit. Helps release RbfA from mature subunits. May play a role in the assembly of ribosomal proteins into the subunit. Circularly permuted GTPase that catalyzes slow GTP hydrolysis, GTPase activity is stimulated by the 30S ribosomal subunit. The protein is Small ribosomal subunit biogenesis GTPase RsgA of Phytoplasma mali (strain AT).